Reading from the N-terminus, the 549-residue chain is Fas-activated serine/threonine kinase (549 aa).

The interval 1 to 30 (MRRPRGEPGPRAPRPTEGATCAGPGESWSP) is disordered. The 59-residue stretch at 477 to 535 (VVLVLRERWHFCRDGRVLLGSRALRERHLGLMGYQLLPLPFEELESQRGLPQLKSYLRQ) folds into the RAP domain.

This sequence belongs to the FAST protein kinase family. Interacts with TIA1; the interactions leads to TIA1 phosphorylation. Interacts with TIAR. In terms of processing, autophosphorylated on serine/threonine residues. Activated by dephosphorylation. Expressed in heart, brain, placenta, lung, liver, skeletal muscle, kidney and pancreas.

It is found in the mitochondrion matrix. It catalyses the reaction L-seryl-[Fas-activated protein] + ATP = O-phospho-L-seryl-[Fas-activated protein] + ADP + H(+). The enzyme catalyses L-threonyl-[Fas-activated protein] + ATP = O-phospho-L-threonyl-[Fas-activated protein] + ADP + H(+). It carries out the reaction L-seryl-[protein] + ATP = O-phospho-L-seryl-[protein] + ADP + H(+). The catalysed reaction is L-threonyl-[protein] + ATP = O-phospho-L-threonyl-[protein] + ADP + H(+). Functionally, phosphorylates the splicing regulator TIA1, thereby promoting the inclusion of FAS exon 6, which leads to an mRNA encoding a pro-apoptotic form of the receptor. Required for the biogenesis of some mitochondrial-encoded mRNAs, specifically stabilizes ND6 (NADH dehydrogenase complex subunit 6) mRNA, and regulates its levels. This chain is Fas-activated serine/threonine kinase (FASTK), found in Homo sapiens (Human).